An 855-amino-acid polypeptide reads, in one-letter code: DNA mismatch repair protein MutS (855 aa).

616-623 (GPNMGGKS) contributes to the ATP binding site.

It belongs to the DNA mismatch repair MutS family.

This protein is involved in the repair of mismatches in DNA. It is possible that it carries out the mismatch recognition step. This protein has a weak ATPase activity. The chain is DNA mismatch repair protein MutS from Salmonella dublin (strain CT_02021853).